A 48-amino-acid chain; its full sequence is Delta-stichotoxin-Hcr1b (48 aa).

3 cysteine pairs are disulfide-bonded: cysteine 3/cysteine 43, cysteine 5/cysteine 33, and cysteine 26/cysteine 44.

It belongs to the sea anemone sodium channel inhibitory toxin family. Type II subfamily.

The protein localises to the secreted. The protein resides in the nematocyst. Functionally, binds to site 3 of voltage-gated sodium channels and inhibits the inactivation process. The sequence is that of Delta-stichotoxin-Hcr1b from Radianthus crispa (Leathery sea anemone).